The chain runs to 542 residues: Propane 2-monooxygenase, hydroxylase component large subunit (542 aa).

Fe cation is bound by residues glutamate 97, glutamate 127, histidine 130, glutamate 192, glutamate 226, and histidine 229.

The protein belongs to the TmoA/XamoA family. In terms of assembly, the propane 2-monooxygenase multicomponent enzyme system is composed of an electron transfer component and a monooxygenase component interacting with the effector protein MimD. The electron transfer component is composed of a reductase (MimB), and the monooxygenase component is formed by a large subunit (MimA) and a small subunit (MimC). Requires the presence of the chaperonin-like protein MimG to ensure a productive folding, resulting of a soluble MimA, which leads to the active form of MimABCD. Fe(2+) serves as cofactor.

The enzyme catalyses propane + NADH + O2 + H(+) = propan-2-ol + NAD(+) + H2O. It catalyses the reaction acetone + NADH + O2 + H(+) = hydroxyacetone + NAD(+) + H2O. It carries out the reaction butan-2-one + NADH + O2 + H(+) = 1-hydroxy-2-butanone + NAD(+) + H2O. The catalysed reaction is phenol + NADH + O2 + H(+) = hydroquinone + NAD(+) + H2O. In terms of biological role, component of the propane 2-monooxygenase multicomponent enzyme system which is involved in the degradation of propane via the O2-dependent hydroxylation of propane. Also involved in the degradation of acetone via the O2-dependent hydroxylation of acetone. Also able to catalyze the oxidation of phenol, methylethylketone (2-butanone), 1-propanol and 2-propanol. In Mycolicibacterium goodii (Mycobacterium goodii), this protein is Propane 2-monooxygenase, hydroxylase component large subunit.